The sequence spans 875 residues: MTDIDVRLREDVHVLGELLGETIRQQHGDAFLQKIEDIRHSAKADRRGPGEQLSSTLADLAEEDLLPVARAFNQFLNLANMAEQYQLIRRRDADQPEPFEAQVLPELLGRLKQAGHSNDALARQLAKLDIQLVLTAHPTEVARRTLIQKYDAIAGQLAAQDHRDLTSAERQQVRERLRRLIAEAWHTEEIRRTRPTPVDEAKWGFAVIEHSLWHAIPSHLRKVDKALLEATGLRLPLEAAPIRFASWMGGDRDGNPNVTAAVTREVLLLARWMAADLFLRDIDALAAELSMQQANDALRKQVGDSAEPYRAVLKQLRDRLRATRAWAHSALTSNQPAGADVLVDNRELIAPLELCYQSLHECGMGVIAEGPLLDCLRRAVTFGLFLGRLDVRQDAARHRDALTEITDYLGLGRYADWDEEQRIAFLQAELKNRRPLLPAHFKPQADTAEVLATCREVAAAPAASLGSYVISMAGAASDVLAVQLLLKEAGLTRPMRVVPLFETLADLDNAGPVMQRLLGLPGYRAGLRGPQEVMIGYSDSAKDAGTTAAAWAQYRAQENLVRICAEHQVELLLFHGRGGTVGRGGGPAHAAILSQPPGSVAGRFRTTEQGEMIRFKFGLPGIAEQNLNLYLAAVLEATLLPPPPPQPAWREVMDQLAADGVQAYRSVVRENPDFVEYFRQSTPEQELGRLPLGSRPAKRRAGGIESLRAIPWIFGWTQTRLMLPAWLGWETALTNALARGQGELLAQMREQWPFFRTRIDMLEMVLAKADAQIAEAYDERLVQPHLRPLGAHLRDLLSQSCQVVLGLTGQPVLLAHSPETLEFISLRNTYLDPLHRLQAELLARSRSREAALDSPLEQALLVTVAGIAAGLRNTG.

Catalysis depends on residues His137 and Lys542.

It belongs to the PEPCase type 1 family. Requires Mg(2+) as cofactor.

It catalyses the reaction oxaloacetate + phosphate = phosphoenolpyruvate + hydrogencarbonate. In terms of biological role, forms oxaloacetate, a four-carbon dicarboxylic acid source for the tricarboxylic acid cycle. The chain is Phosphoenolpyruvate carboxylase from Pseudomonas putida (strain ATCC 700007 / DSM 6899 / JCM 31910 / BCRC 17059 / LMG 24140 / F1).